Reading from the N-terminus, the 872-residue chain is Cadherin-1 (872 aa).

The signal sequence occupies residues 1–25 (MGLKRPWLLGAVVLLTLIQVQGGLA). Residues 26-148 (EWTQCRMGFS…SETGLKRQKR (123 aa)) constitute a propeptide that is removed on maturation. 5 Cadherin domains span residues 148-256 (RDWV…DPVF), 257-370 (TQSV…PPVF), 371-481 (DPTQ…APIF), 482-589 (LPPV…GPFL), and 605-688 (VFTI…MQCE). Residues 149-701 (DWVIPPIIVS…AIAGGLGISA (553 aa)) are Extracellular-facing. N-linked (GlcNAc...) asparagine glycosylation is present at asparagine 209. The Ca(2+) site is built by aspartate 251 and aspartate 282. N-linked (GlcNAc...) asparagine glycosylation is found at asparagine 456, asparagine 552, asparagine 631, and asparagine 669. The helical transmembrane segment at 702 to 722 (IVGILGGILALLLLLLLLLLF) threads the bilayer. The Cytoplasmic segment spans residues 723–872 (VRRKKVVKEP…LADMYGGDED (150 aa)). Residues 739-758 (ETRDNVFSYDEEGGGEEDQD) form a disordered region. Acidic residues predominate over residues 747–758 (YDEEGGGEEDQD).

As to quaternary structure, homodimer. Abundantly expressed in intestine, stomach, liver, kidney, skin and eye. Also expressed in heart, lung, testis, ovary, muscle and brain.

The protein resides in the cell junction. Its subcellular location is the adherens junction. It localises to the cell membrane. The protein localises to the endosome. It is found in the golgi apparatus. The protein resides in the trans-Golgi network. Its subcellular location is the cytoplasm. It localises to the desmosome. Functionally, cadherins are calcium-dependent cell adhesion proteins. They preferentially interact with themselves in a homophilic manner in connecting cells; cadherins may thus contribute to the sorting of heterogeneous cell types. Promotes organization of radial actin fiber structure and cellular response to contractile forces, via anchoring of radial actin fibers to CDH1 junction complexes at the cell membrane. E-cadherin is a ligand for integrin alpha-E/beta-7. This is Cadherin-1 (cdh1) from Xenopus laevis (African clawed frog).